We begin with the raw amino-acid sequence, 705 residues long: Choline transporter-like protein 2 (705 aa).

The Cytoplasmic segment spans residues 1–33 (MGKDSQHYYGKHGTPQKYDPTFKGPIYNRGCTD). The residue at position 14 (threonine 14) is a Phosphothreonine. A helical transmembrane segment spans residues 34 to 54 (IICCVLLFLAIVGYVAVGIIA). The Extracellular portion of the chain corresponds to 55 to 232 (WTHGDPRKVI…QIFEDYTVSW (178 aa)). N-linked (GlcNAc...) asparagine glycosylation is found at asparagine 187 and asparagine 200. The chain crosses the membrane as a helical span at residues 233 to 253 (YWIVIGLVIAMLLSLMFIVLL). Residues 254 to 256 (RFL) lie on the Cytoplasmic side of the membrane. A helical membrane pass occupies residues 257 to 277 (AGVMVWVMIVMVILVLGYGIF). Over 278–315 (HCYAEYSRLRGEAGSDVSLVDLGFQTDLRVYLHLRQTW) the chain is Extracellular. Residues 316-336 (MAFMIILSILEVVIILLLIFL) form a helical membrane-spanning segment. At 337 to 364 (RKRILIAIALIKEASRAVGHVMCSMLYP) the chain is on the cytoplasmic side. A helical membrane pass occupies residues 365-385 (LVTFFLLCLCIAYWASTSVFL). Residues 386–453 (STSNVAVYKI…LQIFNAFMFF (68 aa)) are Extracellular-facing. The N-linked (GlcNAc...) asparagine glycan is linked to asparagine 416. A helical membrane pass occupies residues 454 to 476 (WLANFVLALGQVTLAGAFASYYW). The Cytoplasmic segment spans residues 477-503 (AMRKPDDMPAFPLFSAFGRALRYHTGS). The helical transmembrane segment at 504-524 (LAFGSLILAIVQIIRVMLEYL) threads the bilayer. The Extracellular segment spans residues 525 to 562 (DQRLKAAQNKFAKFLMVCLKCCFWCLEKFIKFLNRNAY). The chain crosses the membrane as a helical span at residues 563–583 (IMIAIYGTNFCTSARNAFFLL). Residues 584–598 (MRNIIRVAVLDKVTD) are Cytoplasmic-facing. Residues 599-619 (FLFLLGKLLIVGSVGILAFFF) traverse the membrane as a helical segment. Over 620-637 (FTHRIRIVQDTAPPLNYY) the chain is Extracellular. The chain crosses the membrane as a helical span at residues 638 to 658 (WVPILTVIIGSYLIAHGFFSV). Over 659–705 (YGMCVDTLFLCFLEDLERNDGSAERPYFMSSTLKKLLNKTNKKVAES) the chain is Cytoplasmic.

Belongs to the CTL (choline transporter-like) family. In terms of assembly, interacts with COCH. Post-translationally, N-glycosylated.

The protein localises to the cell membrane. It localises to the mitochondrion outer membrane. The catalysed reaction is choline(out) + n H(+)(in) = choline(in) + n H(+)(out). It carries out the reaction ethanolamine(out) + n H(+)(in) = ethanolamine(in) + n H(+)(out). Exhibits choline transporter activity, as choline/H+ antiporter. Also acts as a low-affinity ethanolamine/H+ antiporter, regulating the supply of extracellular ethanolamine (Etn) for the CDP-Etn pathway, redistribute intracellular Etn and balance the CDP-Cho and CDP-Etn arms of the Kennedy pathway. The polypeptide is Choline transporter-like protein 2 (Slc44a2) (Rattus norvegicus (Rat)).